A 1910-amino-acid polypeptide reads, in one-letter code: C2 domain-containing protein (1910 aa).

Basic and acidic residues predominate over residues 1–28; sequence MMKLKEMVEAAEAKVESKPPQAAEEKAP. Disordered regions lie at residues 1–54, 355–377, and 398–428; these read MMKL…EPLD, AMKL…PEDG, and LEEL…DGPQ. Basic and acidic residues predominate over residues 414–423; sequence KGEDKKDGNK. Residues 557–678 form the C2 domain; sequence QLGEVSESDS…FFNEKHNKRN (122 aa). 2 stretches are compositionally biased toward basic and acidic residues: residues 1192–1205 and 1215–1228; these read LAQK…DAQR and GHEG…DKQG. Disordered stretches follow at residues 1192–1267, 1405–1424, 1431–1654, 1666–1747, 1822–1841, and 1879–1910; these read LAQK…VKKG, ATAG…RDMQ, LEEA…SMGA, QRKH…FLSS, AKEE…DWSD, and DACS…AGRT. Composition is skewed to low complexity over residues 1239–1257 and 1405–1414; these read AAAA…VQGA and ATAGEGEQQT. Positions 1440-1469 are enriched in basic residues; that stretch reads KKKKKKEKKEKKEKKEKKEKKEKKEKKKKK. Low complexity predominate over residues 1492 to 1502; sequence PAAAIPSVLLP. Over residues 1517-1526 the composition is skewed to basic residues; sequence KKEKKEKKKK. Low complexity predominate over residues 1550-1561; it reads PAAAIPSILLPA. The span at 1569–1584 shows a compositional bias: basic and acidic residues; the sequence is EKPKEKKTEKKKEKHT. Residues 1595 to 1604 are compositionally biased toward polar residues; the sequence is LPESETTAVV. Composition is skewed to low complexity over residues 1620-1629 and 1675-1698; these read VPSSIASSEA and SSSS…SSSS. Basic and acidic residues predominate over residues 1701-1711; that stretch reads AETRAKADALR. 2 stretches are compositionally biased toward low complexity: residues 1712–1722 and 1729–1747; these read ARLQAAQARLA and VSSS…FLSS. The stretch at 1766-1828 forms a coiled coil; it reads QQRLQKMVSG…TRRAKEEKDL (63 aa). The segment covering 1890-1904 has biased composition (polar residues); it reads ESRTTAGAKLRQQQL.

The protein resides in the membrane. In terms of biological role, regulates microneme secretion. Probably involved in regulation of rhoptry and dense granule secretion. This Toxoplasma gondii protein is C2 domain-containing protein.